The chain runs to 92 residues: Small ribosomal subunit protein uS19 (92 aa).

The protein belongs to the universal ribosomal protein uS19 family.

Functionally, protein S19 forms a complex with S13 that binds strongly to the 16S ribosomal RNA. The sequence is that of Small ribosomal subunit protein uS19 from Rickettsia bellii (strain OSU 85-389).